Here is a 222-residue protein sequence, read N- to C-terminus: Phosphoribosylformylglycinamidine synthase subunit PurQ (222 aa).

A Glutamine amidotransferase type-1 domain is found at 3–222; sequence AAVVVFPGSN…RALTGALAAV (220 aa). The active-site Nucleophile is the cysteine 86. Residues histidine 194 and glutamate 196 contribute to the active site.

As to quaternary structure, part of the FGAM synthase complex composed of 1 PurL, 1 PurQ and 2 PurS subunits.

The protein resides in the cytoplasm. The catalysed reaction is N(2)-formyl-N(1)-(5-phospho-beta-D-ribosyl)glycinamide + L-glutamine + ATP + H2O = 2-formamido-N(1)-(5-O-phospho-beta-D-ribosyl)acetamidine + L-glutamate + ADP + phosphate + H(+). The enzyme catalyses L-glutamine + H2O = L-glutamate + NH4(+). The protein operates within purine metabolism; IMP biosynthesis via de novo pathway; 5-amino-1-(5-phospho-D-ribosyl)imidazole from N(2)-formyl-N(1)-(5-phospho-D-ribosyl)glycinamide: step 1/2. Functionally, part of the phosphoribosylformylglycinamidine synthase complex involved in the purines biosynthetic pathway. Catalyzes the ATP-dependent conversion of formylglycinamide ribonucleotide (FGAR) and glutamine to yield formylglycinamidine ribonucleotide (FGAM) and glutamate. The FGAM synthase complex is composed of three subunits. PurQ produces an ammonia molecule by converting glutamine to glutamate. PurL transfers the ammonia molecule to FGAR to form FGAM in an ATP-dependent manner. PurS interacts with PurQ and PurL and is thought to assist in the transfer of the ammonia molecule from PurQ to PurL. The polypeptide is Phosphoribosylformylglycinamidine synthase subunit PurQ (Roseobacter denitrificans (strain ATCC 33942 / OCh 114) (Erythrobacter sp. (strain OCh 114))).